Here is a 168-residue protein sequence, read N- to C-terminus: S-ribosylhomocysteine lyase (168 aa).

3 residues coordinate Fe cation: histidine 54, histidine 58, and cysteine 128.

This sequence belongs to the LuxS family. Homodimer. Fe cation is required as a cofactor.

The enzyme catalyses S-(5-deoxy-D-ribos-5-yl)-L-homocysteine = (S)-4,5-dihydroxypentane-2,3-dione + L-homocysteine. Its function is as follows. Involved in the synthesis of autoinducer 2 (AI-2) which is secreted by bacteria and is used to communicate both the cell density and the metabolic potential of the environment. The regulation of gene expression in response to changes in cell density is called quorum sensing. Catalyzes the transformation of S-ribosylhomocysteine (RHC) to homocysteine (HC) and 4,5-dihydroxy-2,3-pentadione (DPD). The chain is S-ribosylhomocysteine lyase from Histophilus somni (strain 129Pt) (Haemophilus somnus).